A 427-amino-acid polypeptide reads, in one-letter code: Flotillin-1 (427 aa).

S19, S163, and S385 each carry phosphoserine. T387 carries the post-translational modification Phosphothreonine.

This sequence belongs to the band 7/mec-2 family. Flotillin subfamily. In terms of assembly, heterooligomeric complex of flotillin-1 and flotillin-2 and caveolin-1 and caveolin-2. Interacts with ECPAS.

The protein localises to the cell membrane. It localises to the endosome. It is found in the membrane. Its subcellular location is the caveola. The protein resides in the melanosome. The protein localises to the membrane raft. May act as a scaffolding protein within caveolar membranes, functionally participating in formation of caveolae or caveolae-like vesicles. This Macaca mulatta (Rhesus macaque) protein is Flotillin-1 (FLOT1).